Consider the following 119-residue polypeptide: Large ribosomal subunit protein bL20 (119 aa).

Belongs to the bacterial ribosomal protein bL20 family.

In terms of biological role, binds directly to 23S ribosomal RNA and is necessary for the in vitro assembly process of the 50S ribosomal subunit. It is not involved in the protein synthesizing functions of that subunit. The chain is Large ribosomal subunit protein bL20 from Alcanivorax borkumensis (strain ATCC 700651 / DSM 11573 / NCIMB 13689 / SK2).